The following is a 392-amino-acid chain: Succinyl-diaminopimelate desuccinylase (392 aa).

Zn(2+) is bound at residue H77. Residue D79 is part of the active site. Residue D110 participates in Zn(2+) binding. E144 serves as the catalytic Proton acceptor. Residues E145, E173, and H359 each coordinate Zn(2+).

It belongs to the peptidase M20A family. DapE subfamily. In terms of assembly, homodimer. The cofactor is Zn(2+). Co(2+) serves as cofactor.

The enzyme catalyses N-succinyl-(2S,6S)-2,6-diaminopimelate + H2O = (2S,6S)-2,6-diaminopimelate + succinate. Its pathway is amino-acid biosynthesis; L-lysine biosynthesis via DAP pathway; LL-2,6-diaminopimelate from (S)-tetrahydrodipicolinate (succinylase route): step 3/3. Its function is as follows. Catalyzes the hydrolysis of N-succinyl-L,L-diaminopimelic acid (SDAP), forming succinate and LL-2,6-diaminopimelate (DAP), an intermediate involved in the bacterial biosynthesis of lysine and meso-diaminopimelic acid, an essential component of bacterial cell walls. The polypeptide is Succinyl-diaminopimelate desuccinylase (Thiobacillus denitrificans (strain ATCC 25259 / T1)).